A 316-amino-acid polypeptide reads, in one-letter code: Pantothenate kinase (316 aa).

Position 95–102 (Gly95–Ser102) interacts with ATP.

It belongs to the prokaryotic pantothenate kinase family.

It is found in the cytoplasm. The enzyme catalyses (R)-pantothenate + ATP = (R)-4'-phosphopantothenate + ADP + H(+). It participates in cofactor biosynthesis; coenzyme A biosynthesis; CoA from (R)-pantothenate: step 1/5. The polypeptide is Pantothenate kinase (Shigella dysenteriae serotype 1 (strain Sd197)).